Reading from the N-terminus, the 107-residue chain is L-rhamnose mutarotase (107 aa).

A substrate-binding site is contributed by Tyr21. His25 functions as the Proton donor in the catalytic mechanism. Substrate-binding positions include Tyr44 and 79–80 (WW). A disordered region spans residues 88 to 107 (ETNPDNSPKTNSLKEVFHLD). A compositionally biased stretch (polar residues) spans 90–100 (NPDNSPKTNSL).

Belongs to the rhamnose mutarotase family. As to quaternary structure, homodimer.

It is found in the cytoplasm. The catalysed reaction is alpha-L-rhamnose = beta-L-rhamnose. Its pathway is carbohydrate metabolism; L-rhamnose metabolism. Its function is as follows. Involved in the anomeric conversion of L-rhamnose. This chain is L-rhamnose mutarotase, found in Flavobacterium johnsoniae (strain ATCC 17061 / DSM 2064 / JCM 8514 / BCRC 14874 / CCUG 350202 / NBRC 14942 / NCIMB 11054 / UW101) (Cytophaga johnsonae).